We begin with the raw amino-acid sequence, 115 residues long: NADH-ubiquinone oxidoreductase chain 3 (115 aa).

Helical transmembrane passes span 3-23, 55-75, and 84-104; these read LIMT…IAFW, FFLV…LLPL, and LTTM…SLAY.

This sequence belongs to the complex I subunit 3 family. In terms of assembly, core subunit of respiratory chain NADH dehydrogenase (Complex I) which is composed of 45 different subunits. Interacts with TMEM186. Interacts with TMEM242.

It is found in the mitochondrion inner membrane. It catalyses the reaction a ubiquinone + NADH + 5 H(+)(in) = a ubiquinol + NAD(+) + 4 H(+)(out). In terms of biological role, core subunit of the mitochondrial membrane respiratory chain NADH dehydrogenase (Complex I) which catalyzes electron transfer from NADH through the respiratory chain, using ubiquinone as an electron acceptor. Essential for the catalytic activity of complex I. The protein is NADH-ubiquinone oxidoreductase chain 3 of Ailurus fulgens (Himalayan red panda).